The following is a 145-amino-acid chain: Protein SprT-like (145 aa).

Positions 4 to 141 (TDYVKEVSRQ…CGNCHGKLRH (138 aa)) constitute a SprT-like domain. Residue His-64 coordinates Zn(2+). Glu-65 is a catalytic residue. Residue His-68 participates in Zn(2+) binding.

The protein belongs to the SprT family. Zn(2+) serves as cofactor.

The protein resides in the cytoplasm. In Streptococcus mutans serotype c (strain ATCC 700610 / UA159), this protein is Protein SprT-like.